A 111-amino-acid polypeptide reads, in one-letter code: Large ribosomal subunit protein uL22 (111 aa).

It belongs to the universal ribosomal protein uL22 family. In terms of assembly, part of the 50S ribosomal subunit.

This protein binds specifically to 23S rRNA; its binding is stimulated by other ribosomal proteins, e.g. L4, L17, and L20. It is important during the early stages of 50S assembly. It makes multiple contacts with different domains of the 23S rRNA in the assembled 50S subunit and ribosome. In terms of biological role, the globular domain of the protein is located near the polypeptide exit tunnel on the outside of the subunit, while an extended beta-hairpin is found that lines the wall of the exit tunnel in the center of the 70S ribosome. This is Large ribosomal subunit protein uL22 from Xanthomonas euvesicatoria pv. vesicatoria (strain 85-10) (Xanthomonas campestris pv. vesicatoria).